Reading from the N-terminus, the 458-residue chain is A-type ATP synthase subunit B (458 aa).

The protein belongs to the ATPase alpha/beta chains family. As to quaternary structure, has multiple subunits with at least A(3), B(3), C, D, E, F, H, I and proteolipid K(x).

The protein resides in the cell membrane. Its function is as follows. Component of the A-type ATP synthase that produces ATP from ADP in the presence of a proton gradient across the membrane. The B chain is a regulatory subunit. This Methanocella arvoryzae (strain DSM 22066 / NBRC 105507 / MRE50) protein is A-type ATP synthase subunit B.